The following is a 266-amino-acid chain: Type II iodothyronine deiodinase (266 aa).

Over 1–9 (MGLLSVDLL) the chain is Lumenal. The helical; Signal-anchor for type III membrane protein transmembrane segment at 10–34 (ITLQILPVFFSNCLFLALYDSVILL) threads the bilayer. Over 35–266 (KHVALLLSRS…KNFSKRUILD (232 aa)) the chain is Cytoplasmic. Residue Sec130 is part of the active site. Residues Sec130 and Sec263 are each a non-standard amino acid (selenocysteine).

Belongs to the iodothyronine deiodinase family. In terms of assembly, predominantly monomer. Can form homodimers but homodimerization is not essential for enzyme activity. Interacts with USP20 and USP33. Interacts with MARCHF6. Ubiquitinated by MARCHF6, leading to its degradation by the proteasome. Deubiquitinated by USP20 and USP33. As to expression, expressed in cerebral cortex, cerebellum, pituitary gland, mostly in anterior pituitary gland, and pineal gland, as well as in brown adipose tissue (BAT).

The protein resides in the endoplasmic reticulum membrane. It carries out the reaction 3,3',5-triiodo-L-thyronine + iodide + A + H(+) = L-thyroxine + AH2. The enzyme catalyses 3,3'-diiodo-L-thyronine + iodide + A + H(+) = 3,3',5'-triiodo-L-thyronine + AH2. It catalyses the reaction 3'-iodo-L-thyronine + iodide + A + H(+) = 3',5'-diiodo-L-thyronine + AH2. The catalysed reaction is 3,3'-diiodothyronamine + iodide + A + H(+) = 3,3',5'-triiodothyronamine + AH2. It carries out the reaction 3'-iodothyronamine + iodide + A + H(+) = 3',5'-diiodothyronamine + AH2. In terms of biological role, plays a crucial role in the metabolism of thyroid hormones (TH) and has specific roles in TH activation and inactivation by deiodination. Catalyzes the deiodination of L-thyroxine (T4) to 3,5,3'-triiodothyronine (T3) and 3',5'-diiodothyronine (3',5'-T2) to 3'-monoiodothyronine (3'-T1) via outer-ring deiodination (ORD). Catalyzes the deiodination of 3,3',5'-triiodothyronine (rT3) to 3,3'-diiodothyronine (3,3'-T2) via ORD. Catalyzes the phenolic ring deiodinations of 3,3',5'-triiodothyronamine and 3',5'- diiodothyronamine. The protein is Type II iodothyronine deiodinase (Dio2) of Rattus norvegicus (Rat).